Reading from the N-terminus, the 305-residue chain is UDP-3-O-acyl-N-acetylglucosamine deacetylase (305 aa).

H78, H237, and D241 together coordinate Zn(2+). H264 (proton donor) is an active-site residue.

This sequence belongs to the LpxC family. Zn(2+) is required as a cofactor.

It catalyses the reaction a UDP-3-O-[(3R)-3-hydroxyacyl]-N-acetyl-alpha-D-glucosamine + H2O = a UDP-3-O-[(3R)-3-hydroxyacyl]-alpha-D-glucosamine + acetate. It participates in glycolipid biosynthesis; lipid IV(A) biosynthesis; lipid IV(A) from (3R)-3-hydroxytetradecanoyl-[acyl-carrier-protein] and UDP-N-acetyl-alpha-D-glucosamine: step 2/6. Its function is as follows. Catalyzes the hydrolysis of UDP-3-O-myristoyl-N-acetylglucosamine to form UDP-3-O-myristoylglucosamine and acetate, the committed step in lipid A biosynthesis. The chain is UDP-3-O-acyl-N-acetylglucosamine deacetylase from Dechloromonas aromatica (strain RCB).